The chain runs to 284 residues: Signal peptidase I (284 aa).

The helical transmembrane segment at 4 to 22 (NFPLLLVIAVAVCGALALV) threads the bilayer. Over 23–58 (DLVLFAPRRRAAISSYEGQVNEPDPAVLEKLNKEPL) the chain is Cytoplasmic. The chain crosses the membrane as a helical span at residues 59 to 77 (LVEYGKSFFPVLFIVLVLR). Over 78-284 (SFLVEPFQIP…PNFSRVGVIH (207 aa)) the chain is Periplasmic. Catalysis depends on residues S90 and K145.

This sequence belongs to the peptidase S26 family.

The protein localises to the cell inner membrane. It carries out the reaction Cleavage of hydrophobic, N-terminal signal or leader sequences from secreted and periplasmic proteins.. This chain is Signal peptidase I (lepB), found in Pseudomonas aeruginosa (strain ATCC 15692 / DSM 22644 / CIP 104116 / JCM 14847 / LMG 12228 / 1C / PRS 101 / PAO1).